Here is a 470-residue protein sequence, read N- to C-terminus: Serine--tRNA ligase (470 aa).

Position 272-274 (Thr-272–Glu-274) interacts with L-serine. Arg-303–Glu-305 serves as a coordination point for ATP. L-serine is bound at residue Glu-326. Glu-393–Ser-396 contributes to the ATP binding site. Ser-428 is a binding site for L-serine.

It belongs to the class-II aminoacyl-tRNA synthetase family. Type-1 seryl-tRNA synthetase subfamily. In terms of assembly, homodimer. The tRNA molecule binds across the dimer.

The protein localises to the cytoplasm. The catalysed reaction is tRNA(Ser) + L-serine + ATP = L-seryl-tRNA(Ser) + AMP + diphosphate + H(+). The enzyme catalyses tRNA(Sec) + L-serine + ATP = L-seryl-tRNA(Sec) + AMP + diphosphate + H(+). Its pathway is aminoacyl-tRNA biosynthesis; selenocysteinyl-tRNA(Sec) biosynthesis; L-seryl-tRNA(Sec) from L-serine and tRNA(Sec): step 1/1. Its function is as follows. Catalyzes the attachment of serine to tRNA(Ser). Is also able to aminoacylate tRNA(Sec) with serine, to form the misacylated tRNA L-seryl-tRNA(Sec), which will be further converted into selenocysteinyl-tRNA(Sec). This chain is Serine--tRNA ligase, found in Nitrobacter hamburgensis (strain DSM 10229 / NCIMB 13809 / X14).